Consider the following 398-residue polypeptide: NADH dehydrogenase [ubiquinone] iron-sulfur protein 2 (398 aa).

The [4Fe-4S] cluster site is built by Cys261, Cys267, and Cys282.

The protein belongs to the complex I 49 kDa subunit family. Complex I is composed of about 45 different subunits. This is a component of the iron-sulfur (IP) fragment of the enzyme. Requires [4Fe-4S] cluster as cofactor.

It is found in the mitochondrion. It catalyses the reaction a ubiquinone + NADH + 5 H(+)(in) = a ubiquinol + NAD(+) + 4 H(+)(out). Its function is as follows. Core subunit of the mitochondrial membrane respiratory chain NADH dehydrogenase (Complex I) that is believed to belong to the minimal assembly required for catalysis. Complex I functions in the transfer of electrons from NADH to the respiratory chain. The immediate electron acceptor for the enzyme is believed to be ubiquinone. Component of the iron-sulfur (IP) fragment of the enzyme. The protein is NADH dehydrogenase [ubiquinone] iron-sulfur protein 2 (NAD7) of Nephroselmis olivacea (Green alga).